A 916-amino-acid chain; its full sequence is Rab3 GTPase-activating protein catalytic subunit (916 aa).

Positions 530-574 (NSKRKSEGMVGKASSEEEEDEDDDEGEFFDCDDLTAGAGSPTKAV) are disordered. Phosphoserine occurs at positions 543 and 544. Over residues 545-562 (EEEEDEDDDEGEFFDCDD) the composition is skewed to acidic residues.

It belongs to the Rab3-GAP catalytic subunit family. As to quaternary structure, the Rab3 GTPase-activating complex is a heterodimer composed of Rab3GAP1 and Rab3-GAP.

Its subcellular location is the cytoplasm. Functionally, catalytic subunit of the Rab3 GTPase-activating (Rab3GAP) complex composed of Rab3-GAP and Rab3GAP1, which has both GTPase-activating protein (GAP) activity towards Rab3, and guanine nucleotide exchange factor (GEF) activity towards Rab18. As part of the Rab3GAP complex, required for the rapid induction and sustained expression of synaptic homeostasis at the neuromuscular junction (NMJ). Also participates in the regulation of autophagy in tissues such as larval fat cells and adult muscles. The Rab3GAP complex, acts as a GAP for Rab3 by converting active Rab3-GTP to the inactive form Rab3-GDP. At the neuromuscular junction (NMJ), forms a presynaptic signaling mechanism with Rab3 that regulates progression of synaptic homeostasis at a late stage of vesicle release. Within this mechanism Rab3-GTP acts, directly or indirectly, to inhibit the progression of synaptic homeostasis, and Rab3-GAP functions to inactivate this action of Rab3-GTP. The Rab3GAP complex, acts as a GEF for Rab18 by promoting the conversion of inactive Rab18-GDP to the active form Rab18-GTP. Regulates autophagy as part of a Rab3GAP-Rab18 module. Once Rab18 is activated by the GEF Rab3GAP complex, the Rab3GAP-Rab18 module localizes to autophagosomes, and regulates autolysosome formation and maturation together with the Rab18 interacting effector, the PI3K/Vps34 Complex I. The chain is Rab3 GTPase-activating protein catalytic subunit from Drosophila melanogaster (Fruit fly).